A 378-amino-acid polypeptide reads, in one-letter code: Putative glutamate--cysteine ligase 2 (378 aa).

It belongs to the glutamate--cysteine ligase type 2 family. YbdK subfamily.

The catalysed reaction is L-cysteine + L-glutamate + ATP = gamma-L-glutamyl-L-cysteine + ADP + phosphate + H(+). Functionally, ATP-dependent carboxylate-amine ligase which exhibits weak glutamate--cysteine ligase activity. This is Putative glutamate--cysteine ligase 2 from Bdellovibrio bacteriovorus (strain ATCC 15356 / DSM 50701 / NCIMB 9529 / HD100).